Consider the following 435-residue polypeptide: S-locus-specific glycoprotein BS29-2 (435 aa).

The first 30 residues, 1–30 (MKGVGKPYENSHTSFLLVFFVLTLFSPAFS), serve as a signal peptide directing secretion. The region spanning 33–155 (TLSSIESLKI…NKNDRSGFLW (123 aa)) is the Bulb-type lectin domain. Residues N113, N120, N244, N260, and N389 are each glycosylated (N-linked (GlcNAc...) asparagine). The region spanning 350–430 (CSGDGFTRMK…NGQDLYVRLA (81 aa)) is the PAN domain. 2 disulfides stabilise this stretch: C380–C405 and C388–C390.

In terms of tissue distribution, stigma.

In terms of biological role, involved in sporophytic self-incompatibility system (the inability of flowering plants to achieve self-fertilization). The chain is S-locus-specific glycoprotein BS29-2 (SLSG) from Brassica oleracea var. alboglabra (Chinese kale).